The sequence spans 341 residues: Putative ubiquitin-like-specific protease 1B (341 aa).

Catalysis depends on residues His-231, Asp-248, and Cys-300.

It belongs to the peptidase C48 family.

Protease that catalyzes two essential functions in the SUMO pathway: processing of full-length SUMOs to their mature forms and deconjugation of SUMO from targeted proteins. The polypeptide is Putative ubiquitin-like-specific protease 1B (ULP1B) (Arabidopsis thaliana (Mouse-ear cress)).